Here is a 430-residue protein sequence, read N- to C-terminus: Target of rapamycin complex 1 subunit toc1 (430 aa).

Ser-204 and Ser-399 each carry phosphoserine.

The target of rapamycin complex 1 (TORC1) is composed of at least mip1, pop3/wat1, tco89, toc1 and tor2.

The protein localises to the cytoplasm. Functionally, component of TORC1, which regulates multiple cellular processes to control cell growth in response to environmental signals. Tor2 is essential for growth. Nutrient limitation and environmental stress signals cause inactivation of TORC1. Active TORC1 positively controls cell growth and ribosome biogenesis by regulating ribosomal protein gene expression. TORC1 negatively controls G1 cell-cycle arrest, sexual development and amino acid uptake. Represses mating, meiosis and sporulation efficiency by interfering with the functions of the transcription factor ste11 and the meiosis-promoting RNA-binding protein mei2. This Schizosaccharomyces pombe (strain 972 / ATCC 24843) (Fission yeast) protein is Target of rapamycin complex 1 subunit toc1.